We begin with the raw amino-acid sequence, 159 residues long: SsrA-binding protein (159 aa).

This sequence belongs to the SmpB family.

The protein localises to the cytoplasm. Its function is as follows. Required for rescue of stalled ribosomes mediated by trans-translation. Binds to transfer-messenger RNA (tmRNA), required for stable association of tmRNA with ribosomes. tmRNA and SmpB together mimic tRNA shape, replacing the anticodon stem-loop with SmpB. tmRNA is encoded by the ssrA gene; the 2 termini fold to resemble tRNA(Ala) and it encodes a 'tag peptide', a short internal open reading frame. During trans-translation Ala-aminoacylated tmRNA acts like a tRNA, entering the A-site of stalled ribosomes, displacing the stalled mRNA. The ribosome then switches to translate the ORF on the tmRNA; the nascent peptide is terminated with the 'tag peptide' encoded by the tmRNA and targeted for degradation. The ribosome is freed to recommence translation, which seems to be the essential function of trans-translation. In Idiomarina loihiensis (strain ATCC BAA-735 / DSM 15497 / L2-TR), this protein is SsrA-binding protein.